The sequence spans 120 residues: Fluoride-specific ion channel FluC 1 (120 aa).

2 helical membrane-spanning segments follow: residues 3–23 (ALLTAVGAAFGALLRYCLNCA) and 42–62 (LGCLLAGALAALPLPAAVAAL). 2 residues coordinate Na(+): Gly69 and Thr72. A helical membrane pass occupies residues 99–119 (ANLAAGVGAAVLGMAAVGWFL).

The protein belongs to the fluoride channel Fluc/FEX (TC 1.A.43) family.

The protein resides in the cell membrane. The enzyme catalyses fluoride(in) = fluoride(out). Na(+) is not transported, but it plays an essential structural role and its presence is essential for fluoride channel function. Its function is as follows. Fluoride-specific ion channel. Important for reducing fluoride concentration in the cell, thus reducing its toxicity. The polypeptide is Fluoride-specific ion channel FluC 1 (Thermobifida fusca (strain YX)).